The chain runs to 190 residues: Interferon alpha-7 (190 aa).

A signal peptide spans 1 to 23 (MARLCAFLMVLAVMSYWPTCCLG). Intrachain disulfides connect Cys-24-Cys-122 and Cys-52-Cys-162. Asn-101 is a glycosylation site (N-linked (GlcNAc...) asparagine).

Belongs to the alpha/beta interferon family.

It is found in the secreted. In terms of biological role, produced by macrophages, IFN-alpha have antiviral activities. Interferon stimulates the production of two enzymes: a protein kinase and an oligoadenylate synthetase. The sequence is that of Interferon alpha-7 (Ifna7) from Mus musculus (Mouse).